Consider the following 1358-residue polypeptide: MAYSFTEKKRIRKSFGKRQDVLEVPYLLATQVDSYRRFLQLDKQPAARSDEGLHAALKSVFPIKSHSGNIVLEYVSYRLGDPVFDVKECQQRGTTYAAPLRVLVRLVVYDKDAPVGAKVVRDIKEQEIYMGEIPLMTDNGTFVINGTERVIVSQLHRSPGVFFDHDRGKTHSSGKLLFNARIIPYRGSWLDFEFDHKDCVYVRIDRRRKLPATVLLRALGYDNEQIIAEFFDTNRFLLSSAGIQLELIPERLRGDIASFDIRLGDQIVVEKDHRITARHIRMLQKENVNLLDVPKDYLYGKILAHNVVDTSTGELIAKVNQEITEDVYARLVAAAIPEIRTLYVNDLDRGPYISNTMRIDLTETQLDALVEIYRMMRPGEPPTKEAAQTLFENLFFSAERYDLSAVGRMKFNRRLGRTDPTGPGVLENDDIIAVLKELINIRNGGGTVDDIDHLGNRRVRSVGEMVENQFRLGLVRVERAVKERLSLPDADGLMPQEIINAKPVAASIKEFFGSSQLSQFMDQNNPLSEVTHKRRVSALGPGGLARERAGFEVRDVHTTHYGRVCPIETPEGPNIGLINSLAVYSRTNEYGFLETPYRKVIDGRVTDQIEYLSAIEEGQYYIAQASASVDENGMLKDELVSCRHKDEFTLASRENINYMDVSSKQIVSVAASLIPFLEHDDANRALMGSNMQRQAVPTLRTEKPLVGTGMERIVARDSGVAVVAKRGGTVEFVDASRIVVRVNDEETEAGVPGVDIYNLTKYTRSNQNTCINQRPLVKPGDVVARNDVLADGPSTDMGELALGQNLLVAFMPWNGYNFEDSILISERVVQDDRFTTIHIEEKTCVARDTKLGPEEITADIPNVGEAALSKLDESGIVYIGAEVKAGDILVGKVTPKGETQLTPEEKLLRAIFGEKASDVKDTSLRVPSGMDGTVIDVQVFTRDGVKKDERARQIEEAEIERVRKDLNDQLRIIEKDFYQRAEQMVLGKVADMGPGGLKRGATITREYLDSIKPAQWLEIRLQDEDVNLQIEAIAEQIAQQREEIAKRLEEKRRKITMGDDLAPGVLKMVKVYLAVKRRIQPGDKMAGRHGNKGVISRIVPVEDMPYSADGTPVDIVLNPLGVPSRMNVGQVLETHLGWAAKGVGLKIGRMLEAKAKIEEIRSFLTQVYNVSGRQEDIASLSDAEVLELAGNLQDGVPMATPVFDGATEEDIKAMLRLADLPESGQATLFDGRTGDVFDRPVTVGYMYMLKLNHLVDDKMHARSTGPYSLVTQQPLGGKAQFGGQRFGEMEVWALEAYGAAYTLQEMLTVKSDDVNGRTKMYKNIVDGDHRMEAAMPESFNVLIKEIRSLGINIELEQD.

This sequence belongs to the RNA polymerase beta chain family. As to quaternary structure, the RNAP catalytic core consists of 2 alpha, 1 beta, 1 beta' and 1 omega subunit. When a sigma factor is associated with the core the holoenzyme is formed, which can initiate transcription.

The enzyme catalyses RNA(n) + a ribonucleoside 5'-triphosphate = RNA(n+1) + diphosphate. DNA-dependent RNA polymerase catalyzes the transcription of DNA into RNA using the four ribonucleoside triphosphates as substrates. The protein is DNA-directed RNA polymerase subunit beta of Methylococcus capsulatus (strain ATCC 33009 / NCIMB 11132 / Bath).